We begin with the raw amino-acid sequence, 295 residues long: MELSQLLNEIRANYEKILTRNQIETVLSTRIQLEEDISKKMDKDEEALKAAQAELKEARRQWHHLQVEIESLHAVERGLENSLHASEQHYQMQLQDLETVIEGLEKELQEVRRGIEKQLQEHEMLLNTKMRLEQEIATYRHLLEKEEIRYYGCIQGGKKDKKPTTSRVGFVLPSAIINEISFTTKVPQKYENENVETVTKQAILNGSIVKESTEAHGTIQTEKVDEVIKEWEGSFFKDNPRLRKKSVSLRFDLHLAATDEGCLETKQDNLPDIEVRLIMRRSCSIPSIKPPSTAN.

The 150-residue stretch at 1–150 (MELSQLLNEI…HLLEKEEIRY (150 aa)) folds into the IF rod domain. Positions 2-150 (ELSQLLNEIR…HLLEKEEIRY (149 aa)) form a coiled coil.

Belongs to the intermediate filament family.

The protein is Keratin-like protein KRT222 (KRT222) of Homo sapiens (Human).